The primary structure comprises 355 residues: Peptide chain release factor 1 (355 aa).

Residue Q232 is modified to N5-methylglutamine. The interval E282 to Y309 is disordered. Residues A289–R305 are compositionally biased toward basic and acidic residues.

Belongs to the prokaryotic/mitochondrial release factor family. Methylated by PrmC. Methylation increases the termination efficiency of RF1.

Its subcellular location is the cytoplasm. Its function is as follows. Peptide chain release factor 1 directs the termination of translation in response to the peptide chain termination codons UAG and UAA. The polypeptide is Peptide chain release factor 1 (Desulfatibacillum aliphaticivorans).